The sequence spans 74 residues: DNA-directed RNA polymerase subunit omega (74 aa).

It belongs to the RNA polymerase subunit omega family. As to quaternary structure, the RNAP catalytic core consists of 2 alpha, 1 beta, 1 beta' and 1 omega subunit. When a sigma factor is associated with the core the holoenzyme is formed, which can initiate transcription.

It catalyses the reaction RNA(n) + a ribonucleoside 5'-triphosphate = RNA(n+1) + diphosphate. Functionally, promotes RNA polymerase assembly. Latches the N- and C-terminal regions of the beta' subunit thereby facilitating its interaction with the beta and alpha subunits. The polypeptide is DNA-directed RNA polymerase subunit omega (Hydrogenovibrio crunogenus (strain DSM 25203 / XCL-2) (Thiomicrospira crunogena)).